A 156-amino-acid chain; its full sequence is MKKVRLTREGYEKLKQELEELKRKFMYEISERIKEARELGDLSENSEYEAAKNEQGRVGSRIMEIEQILSNAEIIEDSEEGDEVTLGKWVTIRNLDTGEEHKFRIVTPQEADFFAQKLSADSPLGKSLLGRKVGDIVKVKAPGGVQRYQVVEVTNR.

Residues 1–32 (MKKVRLTREGYEKLKQELEELKRKFMYEISER) adopt a coiled-coil conformation.

It belongs to the GreA/GreB family.

In terms of biological role, necessary for efficient RNA polymerase transcription elongation past template-encoded arresting sites. The arresting sites in DNA have the property of trapping a certain fraction of elongating RNA polymerases that pass through, resulting in locked ternary complexes. Cleavage of the nascent transcript by cleavage factors such as GreA or GreB allows the resumption of elongation from the new 3'terminus. GreA releases sequences of 2 to 3 nucleotides. This is Transcription elongation factor GreA from Thermotoga neapolitana (strain ATCC 49049 / DSM 4359 / NBRC 107923 / NS-E).